Consider the following 158-residue polypeptide: Large ribosomal subunit protein uL15 (158 aa).

The span at 1-13 (MKLNEIKDNEGST) shows a compositional bias: basic and acidic residues. The interval 1-45 (MKLNEIKDNEGSTHSRKRLGRGIGSGSGKTGGRGVKGQKSRSGVA) is disordered. Residues 21-35 (RGIGSGSGKTGGRGV) are compositionally biased toward gly residues.

The protein belongs to the universal ribosomal protein uL15 family. As to quaternary structure, part of the 50S ribosomal subunit.

In terms of biological role, binds to the 23S rRNA. This is Large ribosomal subunit protein uL15 from Rhizobium leguminosarum bv. trifolii (strain WSM2304).